Reading from the N-terminus, the 477-residue chain is Trigger factor (477 aa).

The region spanning 163–248 is the PPIase FKBP-type domain; that stretch reads ENLVIFDYKA…ITEVKKSEEV (86 aa). The segment covering 408-461 has biased composition (basic and acidic residues); it reads KAKPSKKEISKEEAEKILKEHQKQDHNHEHDHNHDHDHPEEKKASKSTKIEKKP. Residues 408–477 are disordered; that stretch reads KAKPSKKEIS…KPSTKKVSKK (70 aa).

The protein belongs to the FKBP-type PPIase family. Tig subfamily.

It localises to the cytoplasm. The enzyme catalyses [protein]-peptidylproline (omega=180) = [protein]-peptidylproline (omega=0). Functionally, involved in protein export. Acts as a chaperone by maintaining the newly synthesized protein in an open conformation. Functions as a peptidyl-prolyl cis-trans isomerase. This chain is Trigger factor, found in Pelagibacter ubique (strain HTCC1062).